The chain runs to 444 residues: Transcriptional coactivator nsrH (444 aa).

Residues 74 to 144 form the HTH iclR-type domain; the sequence is ASQVSEILAC…ERDHVAHTPL (71 aa). Positions 104-123 form a DNA-binding region, H-T-H motif; it reads IKDIADLTNVPESRLRRIIR.

It is found in the nucleus. Its function is as follows. Transcriptional coactivator; part of the gene cluster that mediates the biosynthesis of the tetrahydroxanthone dimer neosartorin, which exhibits antibacterial activity. The sequence is that of Transcriptional coactivator nsrH from Aspergillus novofumigatus (strain IBT 16806).